The primary structure comprises 258 residues: SufE-like protein 2, chloroplastic (258 aa).

Residues 1 to 32 form a disordered region; that stretch reads MNTSSSFKALASPPLISTSRPTTKSFPNPRFT. The segment covering 15-32 has biased composition (polar residues); that stretch reads LISTSRPTTKSFPNPRFT. Residue cysteine 122 is the Cysteine persulfide intermediate of the active site.

The protein belongs to the SufE family. As to expression, highly expressed in flowers and pollen, and at low levels in roots, leaves and stems.

The protein resides in the plastid. The protein localises to the chloroplast. The protein operates within cofactor biosynthesis; iron-sulfur cluster biosynthesis. In terms of biological role, participates in cysteine desulfurization mediated by NFS2. Can activate the cysteine desulfurase activity of NFS2 in vitro. Cysteine desulfurization mobilizes sulfur from L-cysteine to yield L-alanine and supplies the inorganic sulfur for iron-sulfur (Fe-S) cluster formation. This is SufE-like protein 2, chloroplastic (SUFE2) from Arabidopsis thaliana (Mouse-ear cress).